Consider the following 213-residue polypeptide: Ribosomal RNA small subunit methyltransferase G (213 aa).

Residues Gly-75, Phe-80, 128-129 (IE), and Arg-144 each bind S-adenosyl-L-methionine.

This sequence belongs to the methyltransferase superfamily. RNA methyltransferase RsmG family.

It is found in the cytoplasm. The enzyme catalyses guanosine(527) in 16S rRNA + S-adenosyl-L-methionine = N(7)-methylguanosine(527) in 16S rRNA + S-adenosyl-L-homocysteine. Functionally, specifically methylates the N7 position of guanine in position 527 of 16S rRNA. The protein is Ribosomal RNA small subunit methyltransferase G of Brucella abortus (strain S19).